The chain runs to 534 residues: Cytochrome P450 monooxygenase CYP4 (534 aa).

A helical membrane pass occupies residues 46–66 (TIIFCVLMSLVGYIVSRIIWG). The N-linked (GlcNAc...) asparagine glycan is linked to asparagine 220. Heme is bound at residue cysteine 477. Asparagine 515 is a glycosylation site (N-linked (GlcNAc...) asparagine).

The protein belongs to the cytochrome P450 family. Heme serves as cofactor.

It is found in the membrane. Its pathway is secondary metabolite biosynthesis. In terms of biological role, cytochrome P450 monooxygenase; part of the gene cluster that mediates the biosynthesis of a tyrosine-derived cytochalasan acting as a fungal signal recognized by resistant rice plants and leads to avirulence in Pi33 resistant rice cultivars. The first step in the pathway is catalyzed by the hybrid PKS-NRPS ACE1, assisted by the enoyl reductase RAP1, that are responsible for fusion of the tyrosine precursor and the polyketide backbone. The polyketide synthase module (PKS) of ACE1 is responsible for the synthesis of the polyketide backbone and the downstream nonribosomal peptide synthetase (NRPS) amidates the carboxyl end of the polyketide with the tyrosine precursor. Because ACE1 lacks a designated enoylreductase (ER) domain, the required activity is provided the enoyl reductase RAP1. Reduction by the hydrolyase ORFZ, followed by dehydration and intra-molecular Diels-Alder cyclization by the Diels-Alderase ORF3 then yield the required isoindolone-fused macrocycle. A number of oxidative steps catalyzed by the tailoring enzymes identified within the cluster, including cytochrome P450 monooxygenases CYP1 to CYP4, the FAD-linked oxidoreductase OXR2 and the short-chain dehydrogenase/reductase OXR1, are further required to afford the final cytochalasans that confer avirulence and which have still to be identified. The monooxygenase CYP1 has been shown to be a site-selective C-18 hydroxylase whereas the function of CYP3 is the site-selective epoxidation of the C-6/C-7 olefin that is present in some intermediate compounds. Finally, SYN2 and RAP2 are not required for avirulence in Pi33 resistant rice cultivars. In Pyricularia oryzae (strain 70-15 / ATCC MYA-4617 / FGSC 8958) (Rice blast fungus), this protein is Cytochrome P450 monooxygenase CYP4.